Consider the following 158-residue polypeptide: Snaclec alboaggregin-D subunit alpha (158 aa).

The first 23 residues, 1–23, serve as a signal peptide directing secretion; it reads MGRFIFGSFGLLVVFLSLSGTGA. 3 disulfides stabilise this stretch: Cys27/Cys38, Cys55/Cys152, and Cys127/Cys144. The C-type lectin domain maps to 34 to 153; that stretch reads YDRYCYQAFS…CAELNPFICK (120 aa).

This sequence belongs to the snaclec family. In terms of assembly, tetramer of heterodimers of alpha and beta subunits (alphabeta)(4); disulfide-linked. In terms of tissue distribution, expressed by the venom gland.

It is found in the secreted. Snaclec that induces human platelet aggregation in the absence of any cofactor with the EC(50) of 0.25 nM and causes tyrosine phosphorylation in human platelets. Antibodies against either platelet GPIbalpha (GP1BA) or GPVI (GP6) inhibit alboaggregin D-induced platelet aggregation. Only the combination of these two antibodies completely inhibit aggregation, suggesting that it acts through both GPIbalpha (GP1BA) and GPVI (GP6). The chain is Snaclec alboaggregin-D subunit alpha from Trimeresurus albolabris (White-lipped pit viper).